Consider the following 125-residue polypeptide: Large ribosomal subunit protein bL12 (125 aa).

This sequence belongs to the bacterial ribosomal protein bL12 family. As to quaternary structure, homodimer. Part of the ribosomal stalk of the 50S ribosomal subunit. Forms a multimeric L10(L12)X complex, where L10 forms an elongated spine to which 2 to 4 L12 dimers bind in a sequential fashion. Binds GTP-bound translation factors.

Its function is as follows. Forms part of the ribosomal stalk which helps the ribosome interact with GTP-bound translation factors. Is thus essential for accurate translation. The sequence is that of Large ribosomal subunit protein bL12 from Sphingopyxis alaskensis (strain DSM 13593 / LMG 18877 / RB2256) (Sphingomonas alaskensis).